The chain runs to 62 residues: Small ribosomal subunit protein uS14 (62 aa).

Zn(2+) is bound by residues cysteine 25, cysteine 28, cysteine 41, and cysteine 44.

Belongs to the universal ribosomal protein uS14 family. Zinc-binding uS14 subfamily. As to quaternary structure, part of the 30S ribosomal subunit. Contacts proteins S3 and S10. It depends on Zn(2+) as a cofactor.

Binds 16S rRNA, required for the assembly of 30S particles and may also be responsible for determining the conformation of the 16S rRNA at the A site. The polypeptide is Small ribosomal subunit protein uS14 (Aquifex aeolicus (strain VF5)).